Consider the following 188-residue polypeptide: Peptidyl-tRNA hydrolase (188 aa).

Tyr15 is a tRNA binding site. The active-site Proton acceptor is the His20. TRNA is bound by residues Phe66, Asn68, and Asn114.

This sequence belongs to the PTH family. In terms of assembly, monomer.

It localises to the cytoplasm. The catalysed reaction is an N-acyl-L-alpha-aminoacyl-tRNA + H2O = an N-acyl-L-amino acid + a tRNA + H(+). Its function is as follows. Hydrolyzes ribosome-free peptidyl-tRNAs (with 1 or more amino acids incorporated), which drop off the ribosome during protein synthesis, or as a result of ribosome stalling. Functionally, catalyzes the release of premature peptidyl moieties from peptidyl-tRNA molecules trapped in stalled 50S ribosomal subunits, and thus maintains levels of free tRNAs and 50S ribosomes. This is Peptidyl-tRNA hydrolase from Lactococcus lactis subsp. cremoris (strain MG1363).